The sequence spans 127 residues: UPF0389 protein GA21628 (127 aa).

A helical membrane pass occupies residues 69-88 (IRLANIMIALTVIGCGIMVY).

It belongs to the UPF0389 family.

The protein resides in the membrane. This Drosophila pseudoobscura pseudoobscura (Fruit fly) protein is UPF0389 protein GA21628.